We begin with the raw amino-acid sequence, 359 residues long: MTAETAFSAAPLPPVEQRIDVLIVGAGPVGLFAAFEAGVLGLSCVLVDVLDRPGGQCTELYPEKPIYDIPALVSCTAQELVDRLLAQCAPFGYPILCGRRAETVETIEGEHGRRFRVTTSVGDVFDCAAVLITAGNGAFAPQRVALPEAAALEGRHLHYAVRDTARFAGKHVVVAGGGDSALDWALALRKTAARVTLVHRREGFRAADASVAGMRAAVAAGEMDFQVGMIGRLDSAPDGTLTGIALRQREGETRLPCDELIALYGLVSEPGPIASWDVEMRAGRIVVETTAYETSRAGVFAAGDIALYPNKQKLILSGFHEVAMALRRAYRYANPDKTLVHTHTSNDTNLQSRLHAAAE.

FAD-binding residues include Asp-48, Gln-56, Tyr-61, Ala-101, Phe-139, Asp-304, and Ser-345. Positions 340–359 (VHTHTSNDTNLQSRLHAAAE) are disordered. Residues 341–352 (HTHTSNDTNLQS) are compositionally biased toward polar residues.

The protein belongs to the ferredoxin--NADP reductase type 2 family. As to quaternary structure, homodimer. It depends on FAD as a cofactor.

It catalyses the reaction 2 reduced [2Fe-2S]-[ferredoxin] + NADP(+) + H(+) = 2 oxidized [2Fe-2S]-[ferredoxin] + NADPH. The sequence is that of Ferredoxin--NADP reductase from Ralstonia nicotianae (strain ATCC BAA-1114 / GMI1000) (Ralstonia solanacearum).